Here is a 142-residue protein sequence, read N- to C-terminus: MPNKALITGFWSKVKVDEVGAEALGRLLVVYPWTQRFFEHFGDLSTADAVLGNAKVKAHGKKVLDSFSNGVQHLDDLKGTFAQLSELHCDKLHVDPENFRLLGNVLVVVLARHFGKEFTPELQAEFQKVVAGVASALAHRYH.

The 141-residue stretch at 2–142 (PNKALITGFW…VASALAHRYH (141 aa)) folds into the Globin domain. The heme b site is built by histidine 59 and histidine 88.

The protein belongs to the globin family. Heterotetramer of two alpha chains and two beta chains. Red blood cells.

Involved in oxygen transport from the lung to the various peripheral tissues. This chain is Hemoglobin subunit beta-C (HBBC), found in Ovis aries (Sheep).